The primary structure comprises 518 residues: WEB family protein At2g40480 (518 aa).

2 coiled-coil regions span residues Asp-95–Glu-141 and Asp-188–Thr-219. A disordered region spans residues Asn-303–Asp-337. Residues Leu-328–Asp-337 show a composition bias toward basic and acidic residues. Residues Ile-344–Lys-375 adopt a coiled-coil conformation.

This sequence belongs to the WEB family.

This Arabidopsis thaliana (Mouse-ear cress) protein is WEB family protein At2g40480.